Consider the following 97-residue polypeptide: MLKMNLANLQLFAHKKGGGSTSNGRDSQAKRLGAKAADGQTVSGGSILYRQRGTHIYPGANVGRGGDDTLFAKVEGVVRFERKGRDKKQVSVYPIAK.

The propeptide occupies 1–12 (MLKMNLANLQLF). The segment at 14–37 (HKKGGGSTSNGRDSQAKRLGAKAA) is disordered.

The protein belongs to the bacterial ribosomal protein bL27 family. In terms of processing, the N-terminus is cleaved by ribosomal processing cysteine protease Prp.

In Streptococcus agalactiae serotype III (strain NEM316), this protein is Large ribosomal subunit protein bL27.